We begin with the raw amino-acid sequence, 357 residues long: GTPase Obg (357 aa).

In terms of domain architecture, Obg spans 1–159; it reads MKFVDEAEIQ…RTLKLELKLL (159 aa). The OBG-type G domain maps to 160–343; sequence ADIGMLGFPN…IMKSAMTLFE (184 aa). Residues 166–173, 191–195, 213–216, 293–296, and 324–326 each bind GTP; these read GFPNVGKS, FTTLY, DVPG, NKAD, and SAV. Mg(2+) is bound by residues S173 and T193.

It belongs to the TRAFAC class OBG-HflX-like GTPase superfamily. OBG GTPase family. As to quaternary structure, monomer. The cofactor is Mg(2+).

The protein localises to the cytoplasm. Its function is as follows. An essential GTPase which binds GTP, GDP and possibly (p)ppGpp with moderate affinity, with high nucleotide exchange rates and a fairly low GTP hydrolysis rate. Plays a role in control of the cell cycle, stress response, ribosome biogenesis and in those bacteria that undergo differentiation, in morphogenesis control. In Xylella fastidiosa (strain M23), this protein is GTPase Obg.